The chain runs to 267 residues: 4-hydroxy-tetrahydrodipicolinate reductase (267 aa).

Residues 8 to 13 (GAAGRM) and E34 each bind NAD(+). R35 lines the NADP(+) pocket. NAD(+) contacts are provided by residues 98-100 (GST) and 122-125 (APNM). H155 (proton donor/acceptor) is an active-site residue. Residue H156 coordinates (S)-2,3,4,5-tetrahydrodipicolinate. K159 acts as the Proton donor in catalysis. Residue 165-166 (GT) coordinates (S)-2,3,4,5-tetrahydrodipicolinate.

The protein belongs to the DapB family.

Its subcellular location is the cytoplasm. The catalysed reaction is (S)-2,3,4,5-tetrahydrodipicolinate + NAD(+) + H2O = (2S,4S)-4-hydroxy-2,3,4,5-tetrahydrodipicolinate + NADH + H(+). It catalyses the reaction (S)-2,3,4,5-tetrahydrodipicolinate + NADP(+) + H2O = (2S,4S)-4-hydroxy-2,3,4,5-tetrahydrodipicolinate + NADPH + H(+). Its pathway is amino-acid biosynthesis; L-lysine biosynthesis via DAP pathway; (S)-tetrahydrodipicolinate from L-aspartate: step 4/4. Functionally, catalyzes the conversion of 4-hydroxy-tetrahydrodipicolinate (HTPA) to tetrahydrodipicolinate. The chain is 4-hydroxy-tetrahydrodipicolinate reductase from Pelobacter propionicus (strain DSM 2379 / NBRC 103807 / OttBd1).